A 56-amino-acid polypeptide reads, in one-letter code: Large ribosomal subunit protein eL20 (56 aa).

The segment at 1 to 24 (MSTYTVRGSFPARDGPQQFEKEVE) is disordered.

Belongs to the eukaryotic ribosomal protein eL20 family. In terms of assembly, part of the 50S ribosomal subunit. Binds 23S rRNA.

This chain is Large ribosomal subunit protein eL20, found in Haloarcula marismortui (strain ATCC 43049 / DSM 3752 / JCM 8966 / VKM B-1809) (Halobacterium marismortui).